The chain runs to 553 residues: Phosphoenolpyruvate carboxykinase (ATP) (553 aa).

A disordered region spans residues 1 to 22 (MAPPTAVGSSINFEGHPTIKST). An ATP-binding site is contributed by 255–262 (GLSGTGKT).

This sequence belongs to the phosphoenolpyruvate carboxykinase (ATP) family.

The catalysed reaction is oxaloacetate + ATP = phosphoenolpyruvate + ADP + CO2. It functions in the pathway carbohydrate biosynthesis; gluconeogenesis. This chain is Phosphoenolpyruvate carboxykinase (ATP) (PCK1), found in Candida albicans (Yeast).